Here is a 206-residue protein sequence, read N- to C-terminus: D-ribitol-5-phosphate phosphatase (206 aa).

Aspartate 8 acts as the Nucleophile in catalysis. Residues aspartate 8 and aspartate 172 each contribute to the Mg(2+) site.

This sequence belongs to the HAD-like hydrolase superfamily. It depends on Mg(2+) as a cofactor.

It carries out the reaction D-ribitol 1-phosphate + H2O = ribitol + phosphate. It catalyses the reaction D-ribitol 5-phosphate + H2O = ribitol + phosphate. The enzyme catalyses 5-amino-6-(5-phospho-D-ribitylamino)uracil + H2O = 5-amino-6-(D-ribitylamino)uracil + phosphate. It functions in the pathway cofactor biosynthesis; riboflavin biosynthesis; 5-amino-6-(D-ribitylamino)uracil from GTP: step 4/4. Functionally, catalyzes the dephosphorylation of D-ribitol-5-phosphate and D-ribitol-1-phosphate. Is also able to dephosphorylate 5-amino-6-(5-phospho-D-ribitylamino)uracil, and thus could be involved in the riboflavin biosynthesis pathway. The chain is D-ribitol-5-phosphate phosphatase from Bacteroides thetaiotaomicron (strain ATCC 29148 / DSM 2079 / JCM 5827 / CCUG 10774 / NCTC 10582 / VPI-5482 / E50).